The sequence spans 408 residues: Argininosuccinate synthase (408 aa).

14–22 serves as a coordination point for ATP; that stretch reads AYSGGLDTS. L-citrulline-binding residues include tyrosine 92 and serine 97. Residue glycine 122 participates in ATP binding. Residues threonine 124, asparagine 128, and aspartate 129 each contribute to the L-aspartate site. L-citrulline is bound at residue asparagine 128. Residues arginine 132, serine 181, serine 190, glutamate 266, and tyrosine 278 each contribute to the L-citrulline site.

It belongs to the argininosuccinate synthase family. Type 1 subfamily. As to quaternary structure, homotetramer.

The protein resides in the cytoplasm. It carries out the reaction L-citrulline + L-aspartate + ATP = 2-(N(omega)-L-arginino)succinate + AMP + diphosphate + H(+). Its pathway is amino-acid biosynthesis; L-arginine biosynthesis; L-arginine from L-ornithine and carbamoyl phosphate: step 2/3. This chain is Argininosuccinate synthase, found in Moorella thermoacetica (strain ATCC 39073 / JCM 9320).